A 138-amino-acid polypeptide reads, in one-letter code: Nanos homolog 2 (138 aa).

A disordered region spans residues 31–55 (ETQEIEEPSPGPPLGQDQGLGAPGA). A Nanos-type zinc finger spans residues 62 to 116 (LCNFCKHNGESRHVYSSHQLKTPDGVVVCPILRHYVCPVCGATGDQAHTLKYCPL). 8 residues coordinate Zn(2+): cysteine 63, cysteine 66, histidine 79, cysteine 90, cysteine 98, cysteine 101, histidine 109, and cysteine 114. 2 short sequence motifs (C2HC) span residues 63–90 (CNFC…VVVC) and 98–114 (CPVC…LKYC).

Belongs to the nanos family. Interacts with CNOT1, CNOT3, CNOT6L, CNOT7 and CNOT9. Testis and ovary. Expression found in several spermatogenic stages: in cells on the periphery of the tubules which could correspond to spermatogonia, in spermatocytes and in round spermatids (at protein level).

The protein localises to the cytoplasm. The protein resides in the P-body. It localises to the perinuclear region. Functionally, plays a key role in the sexual differentiation of germ cells by promoting the male fate but suppressing the female fate. Represses the female fate pathways by suppressing meiosis, which in turn results in the promotion of the male fate. Maintains the suppression of meiosis by preventing STRA8 expression, which is required for premeiotic DNA replication, after CYP26B1 is decreased. Regulates the localization of the CCR4-NOT deadenylation complex to P-bodies and plays a role in recruiting the complex to trigger the degradation of mRNAs involved in meiosis. Required for the maintenance of the spermatogonial stem cell population. Not essential for the assembly of P-bodies but is required for the maintenance of their normal state. This is Nanos homolog 2 (NANOS2) from Homo sapiens (Human).